A 155-amino-acid chain; its full sequence is Small ribosomal subunit protein uS7 (155 aa).

Belongs to the universal ribosomal protein uS7 family. As to quaternary structure, part of the 30S ribosomal subunit. Contacts proteins S9 and S11.

Functionally, one of the primary rRNA binding proteins, it binds directly to 16S rRNA where it nucleates assembly of the head domain of the 30S subunit. Is located at the subunit interface close to the decoding center, probably blocks exit of the E-site tRNA. This Corynebacterium efficiens (strain DSM 44549 / YS-314 / AJ 12310 / JCM 11189 / NBRC 100395) protein is Small ribosomal subunit protein uS7.